The following is a 488-amino-acid chain: UDP-N-acetylmuramate--L-alanine ligase (488 aa).

122–128 (GTHGKTT) contributes to the ATP binding site.

This sequence belongs to the MurCDEF family.

It localises to the cytoplasm. It catalyses the reaction UDP-N-acetyl-alpha-D-muramate + L-alanine + ATP = UDP-N-acetyl-alpha-D-muramoyl-L-alanine + ADP + phosphate + H(+). The protein operates within cell wall biogenesis; peptidoglycan biosynthesis. In terms of biological role, cell wall formation. The polypeptide is UDP-N-acetylmuramate--L-alanine ligase (Mycobacterium ulcerans (strain Agy99)).